Consider the following 394-residue polypeptide: Putative 8-amino-7-oxononanoate synthase (394 aa).

R23 contacts substrate. 110 to 111 (GY) is a pyridoxal 5'-phosphate binding site. H135 lines the substrate pocket. Pyridoxal 5'-phosphate is bound by residues S182, 207 to 210 (DEAH), and 238 to 241 (TFSK). Residue K241 is modified to N6-(pyridoxal phosphate)lysine. Substrate is bound at residue T355.

This sequence belongs to the class-II pyridoxal-phosphate-dependent aminotransferase family. BioF subfamily. In terms of assembly, homodimer. Pyridoxal 5'-phosphate is required as a cofactor.

The enzyme catalyses 6-carboxyhexanoyl-[ACP] + L-alanine + H(+) = (8S)-8-amino-7-oxononanoate + holo-[ACP] + CO2. It functions in the pathway cofactor biosynthesis; biotin biosynthesis. Functionally, catalyzes the decarboxylative condensation of pimeloyl-[acyl-carrier protein] and L-alanine to produce 8-amino-7-oxononanoate (AON), [acyl-carrier protein], and carbon dioxide. This Bacillus cereus (strain Q1) protein is Putative 8-amino-7-oxononanoate synthase (bioF).